A 121-amino-acid polypeptide reads, in one-letter code: MAKITKEQFIESLKEMTIKEVMELVDALKEEFGVDPSAVAVAATPVATEEVKTEVKLTLKAAGQQKVAVIKVVKDLLGLSLMDAKKLVDAAPSVLKEAIKPEEAEEYKAKLVAAGAEVSID.

The protein belongs to the bacterial ribosomal protein bL12 family. Homodimer. Part of the ribosomal stalk of the 50S ribosomal subunit. Forms a multimeric L10(L12)X complex, where L10 forms an elongated spine to which 2 to 4 L12 dimers bind in a sequential fashion. Binds GTP-bound translation factors.

Its function is as follows. Forms part of the ribosomal stalk which helps the ribosome interact with GTP-bound translation factors. Is thus essential for accurate translation. The polypeptide is Large ribosomal subunit protein bL12 (Mesomycoplasma hyopneumoniae (strain 7448) (Mycoplasma hyopneumoniae)).